We begin with the raw amino-acid sequence, 1070 residues long: Carbamoyl phosphate synthase large chain (1070 aa).

The carboxyphosphate synthetic domain stretch occupies residues 1–401; that stretch reads MPKRDDIKTI…ALLKAVRSLE (401 aa). ATP contacts are provided by R129, R169, G175, G176, K208, I210, E215, G241, I242, H243, Q284, and E298. One can recognise an ATP-grasp 1 domain in the interval 133-327; the sequence is RDLMNELGEP…IAKLAAKIAV (195 aa). Positions 284, 298, and 300 each coordinate Mg(2+). Mn(2+) contacts are provided by Q284, E298, and N300. An oligomerization domain region spans residues 402–546; it reads IGADHLLLEE…YSTYEEENES (145 aa). The carbamoyl phosphate synthetic domain stretch occupies residues 547-929; sequence TRSAKESVIV…ALYKGFVASG (383 aa). Residues 671–861 form the ATP-grasp 2 domain; the sequence is EKALGILQIP…MANVATRVIL (191 aa). Residues R707, R746, V748, E752, G777, V778, H779, S780, Q820, and E832 each contribute to the ATP site. Positions 820, 832, and 834 each coordinate Mg(2+). 3 residues coordinate Mn(2+): Q820, E832, and N834. The region spanning 930–1070 is the MGS-like domain; the sequence is TTMHDYGTVL…SEVKQPKARV (141 aa). The allosteric domain stretch occupies residues 930 to 1070; the sequence is TTMHDYGTVL…SEVKQPKARV (141 aa).

Belongs to the CarB family. As to quaternary structure, composed of two chains; the small (or glutamine) chain promotes the hydrolysis of glutamine to ammonia, which is used by the large (or ammonia) chain to synthesize carbamoyl phosphate. Tetramer of heterodimers (alpha,beta)4. It depends on Mg(2+) as a cofactor. Mn(2+) serves as cofactor.

It catalyses the reaction hydrogencarbonate + L-glutamine + 2 ATP + H2O = carbamoyl phosphate + L-glutamate + 2 ADP + phosphate + 2 H(+). The enzyme catalyses hydrogencarbonate + NH4(+) + 2 ATP = carbamoyl phosphate + 2 ADP + phosphate + 2 H(+). Its pathway is amino-acid biosynthesis; L-arginine biosynthesis; carbamoyl phosphate from bicarbonate: step 1/1. It participates in pyrimidine metabolism; UMP biosynthesis via de novo pathway; (S)-dihydroorotate from bicarbonate: step 1/3. Functionally, large subunit of the glutamine-dependent carbamoyl phosphate synthetase (CPSase). CPSase catalyzes the formation of carbamoyl phosphate from the ammonia moiety of glutamine, carbonate, and phosphate donated by ATP, constituting the first step of 2 biosynthetic pathways, one leading to arginine and/or urea and the other to pyrimidine nucleotides. The large subunit (synthetase) binds the substrates ammonia (free or transferred from glutamine from the small subunit), hydrogencarbonate and ATP and carries out an ATP-coupled ligase reaction, activating hydrogencarbonate by forming carboxy phosphate which reacts with ammonia to form carbamoyl phosphate. This chain is Carbamoyl phosphate synthase large chain, found in Listeria monocytogenes serotype 4b (strain CLIP80459).